A 122-amino-acid chain; its full sequence is Large ribosomal subunit protein uL14 (122 aa).

This sequence belongs to the universal ribosomal protein uL14 family. As to quaternary structure, part of the 50S ribosomal subunit. Forms a cluster with proteins L3 and L19. In the 70S ribosome, L14 and L19 interact and together make contacts with the 16S rRNA in bridges B5 and B8.

Functionally, binds to 23S rRNA. Forms part of two intersubunit bridges in the 70S ribosome. This Alkalilimnicola ehrlichii (strain ATCC BAA-1101 / DSM 17681 / MLHE-1) protein is Large ribosomal subunit protein uL14.